The primary structure comprises 246 residues: U11/U12 small nuclear ribonucleoprotein 35 kDa protein (246 aa).

In terms of domain architecture, RRM spans 51 to 129; that stretch reads LTLFVARLNL…HEIFVDYELE (79 aa). K172 is covalently cross-linked (Glycyl lysine isopeptide (Lys-Gly) (interchain with G-Cter in SUMO2)). The tract at residues 187–217 is disordered; that stretch reads SRSRERHWDSRTRDRDHDRGREKRWQEREPT. Residues 192-217 show a composition bias toward basic and acidic residues; that stretch reads RHWDSRTRDRDHDRGREKRWQEREPT.

In terms of assembly, component of the U11/U12 snRNPs that are part of the U12-type spliceosome. As to expression, expressed in heart, liver, skeletal muscle and pancreas.

The protein resides in the nucleus. In Homo sapiens (Human), this protein is U11/U12 small nuclear ribonucleoprotein 35 kDa protein (SNRNP35).